The sequence spans 124 residues: MATINQLVRQPRAKQVVKSNVPALEACPQKRGVCTRVYTTTPKKPNSALRKVCRVRLTNGFEVTSYIGGEGHNLQEHSVVLIRGGRVKDLPGVRYHTVRGALDCAGVNDRKKGRSKYGVKRPKS.

D89 carries the 3-methylthioaspartic acid modification.

The protein belongs to the universal ribosomal protein uS12 family. In terms of assembly, part of the 30S ribosomal subunit. Contacts proteins S8 and S17. May interact with IF1 in the 30S initiation complex.

With S4 and S5 plays an important role in translational accuracy. Functionally, interacts with and stabilizes bases of the 16S rRNA that are involved in tRNA selection in the A site and with the mRNA backbone. Located at the interface of the 30S and 50S subunits, it traverses the body of the 30S subunit contacting proteins on the other side and probably holding the rRNA structure together. The combined cluster of proteins S8, S12 and S17 appears to hold together the shoulder and platform of the 30S subunit. The polypeptide is Small ribosomal subunit protein uS12 (Aliivibrio salmonicida (strain LFI1238) (Vibrio salmonicida (strain LFI1238))).